A 367-amino-acid polypeptide reads, in one-letter code: Phosphoribosylaminoimidazole-succinocarboxamide synthase (367 aa).

The protein belongs to the SAICAR synthetase family.

It catalyses the reaction 5-amino-1-(5-phospho-D-ribosyl)imidazole-4-carboxylate + L-aspartate + ATP = (2S)-2-[5-amino-1-(5-phospho-beta-D-ribosyl)imidazole-4-carboxamido]succinate + ADP + phosphate + 2 H(+). It functions in the pathway purine metabolism; IMP biosynthesis via de novo pathway; 5-amino-1-(5-phospho-D-ribosyl)imidazole-4-carboxamide from 5-amino-1-(5-phospho-D-ribosyl)imidazole-4-carboxylate: step 1/2. The sequence is that of Phosphoribosylaminoimidazole-succinocarboxamide synthase from Vibrio parahaemolyticus serotype O3:K6 (strain RIMD 2210633).